Consider the following 372-residue polypeptide: Putative glutamate--cysteine ligase 2 (372 aa).

This sequence belongs to the glutamate--cysteine ligase type 2 family. YbdK subfamily.

It carries out the reaction L-cysteine + L-glutamate + ATP = gamma-L-glutamyl-L-cysteine + ADP + phosphate + H(+). ATP-dependent carboxylate-amine ligase which exhibits weak glutamate--cysteine ligase activity. This is Putative glutamate--cysteine ligase 2 from Cupriavidus metallidurans (strain ATCC 43123 / DSM 2839 / NBRC 102507 / CH34) (Ralstonia metallidurans).